The following is a 569-amino-acid chain: Protein germ cell-less (569 aa).

A disordered region spans residues 17-43 (SNRRKRKRSTDSSLGKDDPAQLDTTQP). The 71-residue stretch at 66 to 136 (SDVAVMALDK…MYSDEIEIES (71 aa)) folds into the BTB domain. A disordered region spans residues 517–553 (GANSDRPLSPSSADDSAVFIGDSEPSTPSSPAPRPRI).

The protein resides in the cytoplasm. Its function is as follows. Required for the specification of pole cells and germ cell formation. Mothers with reduced glc function give rise to sterile adult progeny that lack germ cells. This chain is Protein germ cell-less (gcl), found in Drosophila melanogaster (Fruit fly).